We begin with the raw amino-acid sequence, 179 residues long: Nicotinamide-nucleotide adenylyltransferase (179 aa).

It belongs to the archaeal NMN adenylyltransferase family.

Its subcellular location is the cytoplasm. The enzyme catalyses beta-nicotinamide D-ribonucleotide + ATP + H(+) = diphosphate + NAD(+). It participates in cofactor biosynthesis; NAD(+) biosynthesis; NAD(+) from nicotinamide D-ribonucleotide: step 1/1. This chain is Nicotinamide-nucleotide adenylyltransferase, found in Thermoplasma acidophilum (strain ATCC 25905 / DSM 1728 / JCM 9062 / NBRC 15155 / AMRC-C165).